A 266-amino-acid polypeptide reads, in one-letter code: RNA-binding protein 7 (266 aa).

N-acetylglycine is present on Gly-2. An RRM domain is found at 10–87 (RTLFVGNLET…RPIKIQFRSG (78 aa)). ZCCHC8 binding stretches follow at residues 25–35 (LLFELFHQAGP) and 59–76 (HEVSVPYAMNLLNGIKLY). Residues 90–115 (HAPQDVSLSYPQHHVGNSSPTSTSPS) are compositionally biased toward polar residues. The disordered stretch occupies residues 90-118 (HAPQDVSLSYPQHHVGNSSPTSTSPSRYE). Phosphoserine is present on residues Ser-136 and Ser-137. Arg-152 carries the omega-N-methylarginine modification. The tract at residues 162–266 (SSPLDQSGFS…RDGKWRSSRH (105 aa)) is disordered. The segment covering 173 to 188 (SVQSHSHSFNQSSSSQ) has biased composition (low complexity). A Phosphoserine modification is found at Ser-204. Positions 209 to 266 (ADRHYSREQRYTDHGSDHHYRGKRDDFFYEDRNHDDWSHDYDNRRDSSRDGKWRSSRH) are enriched in basic and acidic residues.

In terms of assembly, component of the nuclear exosome targeting (NEXT) complex composed of MTREX, ZCCHC8, and RBM7 that directs a subset of non-coding short-lived RNAs for exosomal degradation. Interacts with ZCCHC8 and SF3B2/SAP145. Binds to MTREX through ZCCHC8. Interacts with YWHAE and YWHAZ; these interactions are stress-dependent and RBM7 phosphorylation dependent; release RNA from the NEXT complex and may affect RNA targeting to the nuclear RNA exosomome for degradation. Interacts with MEPCE and LARP7, the core subunits of 7SK snRNP; upon genotoxic stress this interaction is enhanced, triggering the release of inactive P-TEFb complex from the core and P-TEFb complex activation. In terms of processing, phosphorylated at Ser-136 by MAPK14/p38-alpha-activated MAPKAPK2/MK2; this phosphorylation is stress-dependent; this phosphorylation decreases its RNA-binding capacity therefore affecting RNA nuclear exosome-mediated degradation. This phosphorylation mediates YWHAE and YWHAZ interactions. In terms of tissue distribution, ubiquitous.

Its subcellular location is the nucleus. The protein resides in the nucleoplasm. RNA-binding subunit of the trimeric nuclear exosome targeting (NEXT) complex, a complex that functions as an RNA exosome cofactor that directs a subset of non-coding short-lived RNAs for exosomal degradation. NEXT is involved in surveillance and turnover of aberrant transcripts and non-coding RNAs. Binds preferentially polyuridine sequences and associates with newly synthesized RNAs, including pre-mRNAs and short-lived exosome substrates such as promoter upstream transcripts (PROMPTs), enhancer RNAs (eRNAs), and 3'-extended products from small nuclear RNAs (snRNAs). Participates in several biological processes including DNA damage response (DDR) and stress response. During stress response, activation of the p38MAPK-MK2 pathway decreases RBM7-RNA-binding and subsequently the RNA exosome degradation activities, thereby modulating the turnover of non-coding transcriptome. Participates in DNA damage response (DDR), through its interaction with MEPCE and LARP7, the core subunits of 7SK snRNP complex, that release the positive transcription elongation factor b (P-TEFb) complex from the 7SK snRNP. In turn, activation of P-TEFb complex induces the transcription of P-TEFb-dependent DDR genes to promote cell viability. This Homo sapiens (Human) protein is RNA-binding protein 7.